A 297-amino-acid polypeptide reads, in one-letter code: uncharacterized protein (297 aa).

The HTH araC/xylS-type domain maps to 187-285 (EKLIATLHAS…GYAPSAVLKN (99 aa)). 2 consecutive DNA-binding regions (H-T-H motif) follow at residues 204 to 225 (ADMA…LRYT) and 252 to 275 (VGEV…KHKF).

This is an uncharacterized protein from Escherichia coli (strain K12).